Consider the following 259-residue polypeptide: Adenosylcobinamide-GDP ribazoletransferase (259 aa).

6 consecutive transmembrane segments (helical) span residues 9–29, 43–63, 64–84, 118–138, 143–163, and 196–216; these read NLFF…WIEV, LVGL…LYWV, SPSV…GGFH, ALAL…LALF, VSLA…SFIF, and VLAL…GLVI.

Belongs to the CobS family. Mg(2+) is required as a cofactor.

It localises to the cell inner membrane. The catalysed reaction is alpha-ribazole + adenosylcob(III)inamide-GDP = adenosylcob(III)alamin + GMP + H(+). It catalyses the reaction alpha-ribazole 5'-phosphate + adenosylcob(III)inamide-GDP = adenosylcob(III)alamin 5'-phosphate + GMP + H(+). Its pathway is cofactor biosynthesis; adenosylcobalamin biosynthesis; adenosylcobalamin from cob(II)yrinate a,c-diamide: step 7/7. Functionally, joins adenosylcobinamide-GDP and alpha-ribazole to generate adenosylcobalamin (Ado-cobalamin). Also synthesizes adenosylcobalamin 5'-phosphate from adenosylcobinamide-GDP and alpha-ribazole 5'-phosphate. This chain is Adenosylcobinamide-GDP ribazoletransferase, found in Shewanella halifaxensis (strain HAW-EB4).